The primary structure comprises 263 residues: Tryptophan synthase alpha chain (263 aa).

Residues glutamate 49 and aspartate 60 each act as proton acceptor in the active site.

The protein belongs to the TrpA family. In terms of assembly, tetramer of two alpha and two beta chains.

It catalyses the reaction (1S,2R)-1-C-(indol-3-yl)glycerol 3-phosphate + L-serine = D-glyceraldehyde 3-phosphate + L-tryptophan + H2O. It participates in amino-acid biosynthesis; L-tryptophan biosynthesis; L-tryptophan from chorismate: step 5/5. In terms of biological role, the alpha subunit is responsible for the aldol cleavage of indoleglycerol phosphate to indole and glyceraldehyde 3-phosphate. The sequence is that of Tryptophan synthase alpha chain from Cereibacter sphaeroides (strain ATCC 17029 / ATH 2.4.9) (Rhodobacter sphaeroides).